Reading from the N-terminus, the 211-residue chain is MKAISRVLIAMVAAIAALFTSTGTSHAGLDNELSLVDGQDRTLTVQQWDTFLNGVFPLDRNRLTREWFHSGRAKYIVAGPGADEFEGTLELGYQIGFPWSLGVGINFSYTTPNILIDDGDITAPPFGLNSVITPNLFPGVSISADLGNGPGIQEVATFSVDVSGAEGGVAVSNAHGTVTGAAGGVLLRPFARLIASTGDSVTTYGEPWNMN.

An N-terminal signal peptide occupies residues 1-27; the sequence is MKAISRVLIAMVAAIAALFTSTGTSHA.

The protein belongs to the mycobacterial porin (TC 1.B.24) family. In terms of assembly, forms very stable octamers. Isolated as a 100 kDa complex that can be reduced to monomers upon boiling in 80% dimethyl sulfoxide for 15 minutes. Structures show a goblet with the wide end on the exterior of the outer membrane and a central channel. It is not known if mixed oligomers of MspA with other Msp subunits form in vivo.

It localises to the cell outer membrane. The protein resides in the secreted. It is found in the cell wall. Its function is as follows. The major porin in this organism, forms a water-filled channel which favors the permeation of cations, amino acids, iron Fe(3+) and less efficiently phosphate. Does not transport Fe-ExoMS, the predominant siderophore. Plays a role in transport of beta-lactamase and hydrophilic fluoroquinolone antibiotics such as norfloxacin as well as chloramphenicol. There are about 2400 porins in wild-type, 800 in an mspA deletion and 150 in a double mspA-mspC deletion. Different conductance values with maxima at 2.3 and 4.6 nanosiemens might be caused by a simultaneous reconstitution of MspA channels into the membrane or by the existence of different MspA conformations. The sequence is that of Porin MspA (mspA) from Mycolicibacterium smegmatis (strain ATCC 700084 / mc(2)155) (Mycobacterium smegmatis).